The following is a 339-amino-acid chain: Ketol-acid reductoisomerase (NADP(+)) (339 aa).

Positions 1 to 182 (MRVYYDRDAD…GGGRAGIIET (182 aa)) constitute a KARI N-terminal Rossmann domain. NADP(+) is bound by residues 24-27 (YGSQ), arginine 48, serine 51, serine 53, and 83-86 (DELQ). Residue histidine 108 is part of the active site. Glycine 134 provides a ligand contact to NADP(+). The 146-residue stretch at 183 to 328 (TFKEECETDL…ARLRDMMPWI (146 aa)) folds into the KARI C-terminal knotted domain. 4 residues coordinate Mg(2+): aspartate 191, glutamate 195, glutamate 227, and glutamate 231. Serine 252 is a substrate binding site.

It belongs to the ketol-acid reductoisomerase family. The cofactor is Mg(2+).

It carries out the reaction (2R)-2,3-dihydroxy-3-methylbutanoate + NADP(+) = (2S)-2-acetolactate + NADPH + H(+). The enzyme catalyses (2R,3R)-2,3-dihydroxy-3-methylpentanoate + NADP(+) = (S)-2-ethyl-2-hydroxy-3-oxobutanoate + NADPH + H(+). Its pathway is amino-acid biosynthesis; L-isoleucine biosynthesis; L-isoleucine from 2-oxobutanoate: step 2/4. It participates in amino-acid biosynthesis; L-valine biosynthesis; L-valine from pyruvate: step 2/4. In terms of biological role, involved in the biosynthesis of branched-chain amino acids (BCAA). Catalyzes an alkyl-migration followed by a ketol-acid reduction of (S)-2-acetolactate (S2AL) to yield (R)-2,3-dihydroxy-isovalerate. In the isomerase reaction, S2AL is rearranged via a Mg-dependent methyl migration to produce 3-hydroxy-3-methyl-2-ketobutyrate (HMKB). In the reductase reaction, this 2-ketoacid undergoes a metal-dependent reduction by NADPH to yield (R)-2,3-dihydroxy-isovalerate. The polypeptide is Ketol-acid reductoisomerase (NADP(+)) (Bradyrhizobium sp. (strain ORS 278)).